A 274-amino-acid polypeptide reads, in one-letter code: Nickel/cobalt efflux system RcnA (274 aa).

Over 1-12 (MTEFTTLLQQGN) the chain is Periplasmic. The chain crosses the membrane as a helical span at residues 13 to 33 (AWFFIPSAILLGALHGLEPGH). Over 34 to 56 (SKTMMAAFIIAIKGTIKQAVMLG) the chain is Cytoplasmic. A helical transmembrane segment spans residues 57 to 77 (LAATISHTAVVWLIAFGGMVI). The Periplasmic portion of the chain corresponds to 78 to 86 (SKRFTAQSA). Residues 87–107 (EPWLQLISAVIIISTAFWMFW) traverse the membrane as a helical segment. Residues 108–175 (RTWRGERNWL…DGREVTNWQI (68 aa)) are Cytoplasmic-facing. The interval 127–153 (HHHHDHEHHHDHGHHHHHEHGEYQDAH) is disordered. Residues 129–144 (HHDHEHHHDHGHHHHH) are compositionally biased toward basic residues. The chain crosses the membrane as a helical span at residues 176-196 (LLFGLTGGLIPCPAAITVLLI). Residues 197-209 (CIQLKALTLGATL) are Periplasmic-facing. A helical transmembrane segment spans residues 210–230 (VVSFSIGLALTLVTVGVGAAI). Residues 231 to 251 (SVQQVAKRWSGFNTLAKRAPY) are Cytoplasmic-facing. The chain crosses the membrane as a helical span at residues 252 to 272 (FSSLLIGLVGVYMGVHGFMGI). Residues 273–274 (MR) lie on the Periplasmic side of the membrane.

Belongs to the NiCoT transporter (TC 2.A.52) family. RcnA subfamily.

The protein resides in the cell inner membrane. In terms of biological role, efflux system for nickel and cobalt. This chain is Nickel/cobalt efflux system RcnA (rcnA), found in Escherichia coli (strain K12).